We begin with the raw amino-acid sequence, 317 residues long: SWI/SNF-related matrix-associated actin-dependent regulator of chromatin subfamily E member 1-related (317 aa).

Positions 1–17 are enriched in low complexity; sequence MSHGPKQPGAAAAPAGG. The disordered stretch occupies residues 1 to 71; that stretch reads MSHGPKQPGA…RKKILPNGPK (71 aa). Lys31 participates in a covalent cross-link: Glycyl lysine isopeptide (Lys-Gly) (interchain with G-Cter in SUMO2). Residues 31-52 are compositionally biased toward basic and acidic residues; the sequence is KQERGEGPRAGEKGSHEEEPVK. Residues 53-65 are compositionally biased toward basic residues; sequence KRGWPKGKKRKKI. Positions 70-138 form a DNA-binding region, HMG box; sequence PKAPVTGYVR…QYMKELRAYQ (69 aa). Ser160 is subject to Phosphoserine. Positions 190–257 form a coiled coil; that stretch reads EEFLDQNKAR…LQQQLQAVRQ (68 aa).

In terms of assembly, component of a BHC histone deacetylase complex that contains HDAC1, HDAC2, HMG20B/BRAF35, KDM1A, RCOR1/CoREST and PHF21A/BHC80. The BHC complex may also contain ZMYM2, ZNF217, ZMYM3, GSE1 and GTF2I. Interacts with the BRCA2 tumor suppressor protein. Interacts with DTNB. Ubiquitously expressed in adult tissues.

The protein resides in the nucleus. The protein localises to the chromosome. Its function is as follows. Required for correct progression through G2 phase of the cell cycle and entry into mitosis. Required for RCOR1/CoREST mediated repression of neuronal specific gene promoters. The chain is SWI/SNF-related matrix-associated actin-dependent regulator of chromatin subfamily E member 1-related (HMG20B) from Homo sapiens (Human).